The following is a 649-amino-acid chain: Solute carrier family 22 member 17 (649 aa).

Residues 1 to 70 form a disordered region; the sequence is MAPRVATGTP…GGDGLGSSLS (70 aa). The segment covering 24-34 has biased composition (polar residues); it reads VEITPTSNGQV. Basic and acidic residues predominate over residues 47–57; sequence QGEREREREGE. Residues Asn134 and Asn143 are each glycosylated (N-linked (GlcNAc...) asparagine). The next 11 membrane-spanning stretches (helical) occupy residues 211 to 231, 240 to 260, 265 to 285, 300 to 320, 330 to 350, 414 to 433, 448 to 468, 477 to 497, 526 to 546, 557 to 577, and 584 to 604; these read VILE…FLGY, GIVL…AAAG, VMAL…GVYL, ALAG…LALV, MITA…FLES, NIWK…HAIR, FYLC…FLGV, GILL…LGLW, FSVL…LLAA, GLGL…AQRL, and FLQH…IMLL.

It belongs to the major facilitator (TC 2.A.1) superfamily. Organic cation transporter (TC 2.A.1.19) family. Expressed in brain.

The protein localises to the cell membrane. It is found in the vacuole membrane. Its function is as follows. Cell surface receptor for LCN2 (24p3) that plays a key role in iron homeostasis and transport. Able to bind iron-bound LCN2 (holo-24p3), followed by internalization of holo-24p3 and release of iron, thereby increasing intracellular iron concentration and leading to inhibition of apoptosis. Also binds iron-free LCN2 (apo-24p3), followed by internalization of apo-24p3 and its association with an intracellular siderophore, leading to iron chelation and iron transfer to the extracellular medium, thereby reducing intracellular iron concentration and resulting in apoptosis. This Homo sapiens (Human) protein is Solute carrier family 22 member 17 (SLC22A17).